Here is a 432-residue protein sequence, read N- to C-terminus: MGKNVVVLGTQWGDEGKGKVVDLLTERAKYVVRYQGGHNAGHTLVINGEKTVLHLIPSGILRENVVSIIGNGVVLAPDALMKEMTELEARGVPVRERLLLSEACPLILPYHVALDNAREKARGAKAIGTTGRGIGPAYEDKVARRGLRVGDLFDKETFAVKLKEIVEYHNFQLVNYYKADAVDYQKVLDDVLAIADILTAMVVDVSDLLYKAHLRGDFVMFEGAQGTLLDIDHGTYPYVTSSNTTAGGVATGSGLGPRYVDYVLGIVKAYSTRVGAGPFPTELFEEVGEHLSQKGNEFGATTGRRRRTGWLDAVAVRRAVQINSLSGFCLTKLDVLDGLKEIKICVGYRLPNGTEVDTTPLAAEGWEGLEPIYETMPGWSESTFGVKDHSKLPQAALNYIKRIEEVTGVPIDIISTGPDRSETMVLRDPFDA.

Residues 13-19 (GDEGKGK) and 41-43 (GHT) each bind GTP. Asp14 (proton acceptor) is an active-site residue. Residues Asp14 and Gly41 each contribute to the Mg(2+) site. IMP contacts are provided by residues 14 to 17 (DEGK), 39 to 42 (NAGH), Thr130, Arg144, Gln225, Thr240, and Arg304. The active-site Proton donor is the His42. 300-306 (ATTGRRR) contacts substrate. GTP-binding positions include Arg306, 332–334 (KLD), and 415–417 (STG).

This sequence belongs to the adenylosuccinate synthetase family. As to quaternary structure, homodimer. Mg(2+) is required as a cofactor.

It is found in the cytoplasm. The catalysed reaction is IMP + L-aspartate + GTP = N(6)-(1,2-dicarboxyethyl)-AMP + GDP + phosphate + 2 H(+). The protein operates within purine metabolism; AMP biosynthesis via de novo pathway; AMP from IMP: step 1/2. Its function is as follows. Plays an important role in the de novo pathway of purine nucleotide biosynthesis. Catalyzes the first committed step in the biosynthesis of AMP from IMP. In Pectobacterium carotovorum subsp. carotovorum (strain PC1), this protein is Adenylosuccinate synthetase.